A 191-amino-acid chain; its full sequence is Ribonuclease HII (191 aa).

Positions 16 to 191 constitute an RNase H type-2 domain; that stretch reads INLIGIDEAG…KLHRKSFKLL (176 aa). Asp-22, Glu-23, and Asp-110 together coordinate a divalent metal cation.

The protein belongs to the RNase HII family. Mn(2+) is required as a cofactor. Mg(2+) serves as cofactor.

It is found in the cytoplasm. The enzyme catalyses Endonucleolytic cleavage to 5'-phosphomonoester.. In terms of biological role, endonuclease that specifically degrades the RNA of RNA-DNA hybrids. This is Ribonuclease HII (rnhB) from Campylobacter jejuni subsp. jejuni serotype O:2 (strain ATCC 700819 / NCTC 11168).